Reading from the N-terminus, the 248-residue chain is DCN1-like protein 4 (248 aa).

Residues 1-35 (MPRGKRRAADTISDNMDHGQPKRARTSYTSIPTQQ) form a disordered region. Over residues 26–35 (TSYTSIPTQQ) the composition is skewed to polar residues. The 189-residue stretch at 47 to 235 (FSQKRCMAWF…MLDEFVEWLR (189 aa)) folds into the DCUN1 domain.

The protein localises to the nucleus. Its function is as follows. Inhibits neddylation of cullin components of SCF-type E3 ubiquitin ligase complexes and thus regulates SCF-type complex activity. Essential for development. Function inhibits cell proliferation and cell growth. The protein is DCN1-like protein 4 of Drosophila melanogaster (Fruit fly).